The sequence spans 71 residues: ATP synthase F(0) complex subunit e, mitochondrial (71 aa).

The residue at position 34 (Lys-34) is an N6-acetyllysine. Ser-68 is subject to Phosphoserine.

It belongs to the ATPase e subunit family. As to quaternary structure, component of the ATP synthase complex composed at least of ATP5F1A/subunit alpha, ATP5F1B/subunit beta, ATP5MC1/subunit c (homooctomer), MT-ATP6/subunit a, MT-ATP8/subunit 8, ATP5ME/subunit e, ATP5MF/subunit f, ATP5MG/subunit g, ATP5MK/subunit k, ATP5MJ/subunit j, ATP5F1C/subunit gamma, ATP5F1D/subunit delta, ATP5F1E/subunit epsilon, ATP5PF/subunit F6, ATP5PB/subunit b, ATP5PD/subunit d, ATP5PO/subunit OSCP. ATP synthase complex consists of a soluble F(1) head domain (subunits alpha(3) and beta(3)) - the catalytic core - and a membrane F(0) domain - the membrane proton channel (subunits c, a, 8, e, f, g, k and j). These two domains are linked by a central stalk (subunits gamma, delta, and epsilon) rotating inside the F1 region and a stationary peripheral stalk (subunits F6, b, d, and OSCP).

It localises to the mitochondrion. It is found in the mitochondrion inner membrane. Subunit e, of the mitochondrial membrane ATP synthase complex (F(1)F(0) ATP synthase or Complex V) that produces ATP from ADP in the presence of a proton gradient across the membrane which is generated by electron transport complexes of the respiratory chain. ATP synthase complex consist of a soluble F(1) head domain - the catalytic core - and a membrane F(1) domain - the membrane proton channel. These two domains are linked by a central stalk rotating inside the F(1) region and a stationary peripheral stalk. During catalysis, ATP synthesis in the catalytic domain of F(1) is coupled via a rotary mechanism of the central stalk subunits to proton translocation. In vivo, can only synthesize ATP although its ATP hydrolase activity can be activated artificially in vitro. Part of the complex F(0) domain. The protein is ATP synthase F(0) complex subunit e, mitochondrial of Rattus norvegicus (Rat).